A 266-amino-acid polypeptide reads, in one-letter code: Glucosamine-6-phosphate deaminase (266 aa).

Aspartate 72 serves as the catalytic Proton acceptor; for enolization step. The For ring-opening step role is filled by aspartate 141. Catalysis depends on histidine 143, which acts as the Proton acceptor; for ring-opening step. The For ring-opening step role is filled by glutamate 148.

Belongs to the glucosamine/galactosamine-6-phosphate isomerase family. NagB subfamily. As to quaternary structure, homohexamer.

It carries out the reaction alpha-D-glucosamine 6-phosphate + H2O = beta-D-fructose 6-phosphate + NH4(+). Its pathway is amino-sugar metabolism; N-acetylneuraminate degradation; D-fructose 6-phosphate from N-acetylneuraminate: step 5/5. Allosterically activated by N-acetylglucosamine 6-phosphate (GlcNAc6P). In terms of biological role, catalyzes the reversible isomerization-deamination of glucosamine 6-phosphate (GlcN6P) to form fructose 6-phosphate (Fru6P) and ammonium ion. The protein is Glucosamine-6-phosphate deaminase of Tolumonas auensis (strain DSM 9187 / NBRC 110442 / TA 4).